The sequence spans 473 residues: FAD-dependent oxidoreductase dpchF (473 aa).

The signal sequence occupies residues 1 to 21; that stretch reads MKLSFIASPVWALALAQFAAA. 5 N-linked (GlcNAc...) asparagine glycosylation sites follow: asparagine 98, asparagine 128, asparagine 181, asparagine 262, and asparagine 330.

It belongs to the beta-cyclopiazonate dehydrogenase family. Requires FAD as cofactor.

Its pathway is secondary metabolite biosynthesis; terpenoid biosynthesis. Functionally, FAD-dependent oxidoreductase; part of the gene cluster that mediates the biosynthesis of the diterpenoid pyrones higginsianins A and B. The first step of the pathway is the synthesis of the alpha-pyrone moiety by the polyketide synthase dpchA via condensation of one acetyl-CoA starter unit with 3 malonyl-CoA units and 2 methylations. The alpha-pyrone is then combined with geranylgeranyl pyrophosphate (GGPP) formed by the GGPP synthase dpchD through the action of the prenyltransferase dpchC to yield a linear alpha-pyrone diterpenoid. Subsequent steps in the diterpenoid pyrone biosynthetic pathway involve the decalin core formation, which is initiated by the epoxidation of the C10-C11 olefin by the FAD-dependent oxidoreductase dpchE, and is followed by a cyclization cascade catalyzed by the terpene cyclase dpchB. The short chain dehydrogenase/reductase dpchG then oxidizes the 8S hydroxy group to a ketone and the short chain dehydrogenase/reductase dpchH reduces the ketone to the 8R hydroxy group to yield higginsianin B. Finally, the FAD-dependent oxidoreductase dpchF converts higginsianin B into higginsianin A. This chain is FAD-dependent oxidoreductase dpchF, found in Colletotrichum higginsianum (strain IMI 349063) (Crucifer anthracnose fungus).